The following is a 55-amino-acid chain: Large ribosomal subunit protein bL33 (55 aa).

Belongs to the bacterial ribosomal protein bL33 family.

The chain is Large ribosomal subunit protein bL33 from Deinococcus deserti (strain DSM 17065 / CIP 109153 / LMG 22923 / VCD115).